We begin with the raw amino-acid sequence, 195 residues long: Lipid A acyltransferase PagP (195 aa).

Residues 1 to 30 (MRLTLTSRSRLFVLSSLLFISTFDVLSAQA) form the signal peptide. Residues histidine 67, aspartate 110, and serine 111 contribute to the active site.

The protein belongs to the lipid A palmitoyltransferase family. Homodimer.

It is found in the cell outer membrane. The catalysed reaction is a lipid A + a 1,2-diacyl-sn-glycero-3-phosphocholine = a hepta-acyl lipid A + a 2-acyl-sn-glycero-3-phosphocholine. It catalyses the reaction a lipid IVA + a 1,2-diacyl-sn-glycero-3-phosphocholine = a lipid IVB + a 2-acyl-sn-glycero-3-phosphocholine. It carries out the reaction a lipid IIA + a 1,2-diacyl-sn-glycero-3-phosphocholine = a lipid IIB + a 2-acyl-sn-glycero-3-phosphocholine. Transfers a fatty acid residue from the sn-1 position of a phospholipid to the N-linked hydroxyfatty acid chain on the proximal unit of lipid A or its precursors. In Dickeya chrysanthemi (strain Ech1591) (Dickeya zeae (strain Ech1591)), this protein is Lipid A acyltransferase PagP.